We begin with the raw amino-acid sequence, 240 residues long: MSDEFSLADALPENSPAKTSAVSNTKPGQPPQGWPGSNPWNNPSAPPAVPSGLPPSATPSPVPFGPTPTGMYPSVPPTGPPPGPPAPFPPSGPSCPPPGGPYPGPGPTGPYPTPNMPFPELPRPYGAPTDPAAAGPLGPWGSMSSGPWAPGMGGQYPTPNMPYPSPGPYPAPPPPQAPGAAPPVPWGTVPPGAWGPPAPYPAPAGSYPTPGLYPTPNNPFQVPSGPSGAPPMPGGPHSYH.

Residues 1-240 (MSDEFSLADA…PMPGGPHSYH (240 aa)) form a disordered region. Ser-2 is modified (N-acetylserine). 3 positions are modified to phosphoserine: Ser-2, Ser-6, and Ser-15. Polar residues predominate over residues 16–26 (PAKTSAVSNTK). Over residues 34 to 43 (WPGSNPWNNP) the composition is skewed to low complexity. Composition is skewed to pro residues over residues 44–66 (SAPP…PFGP), 74–122 (SVPP…PELP), 159–185 (PNMP…PPVP), and 193–202 (AWGPPAPYPA).

Belongs to the MISS family.

The chain is MAPK-interacting and spindle-stabilizing protein-like (MAPK1IP1L) from Bos taurus (Bovine).